The following is a 220-amino-acid chain: Histone deacetylase complex subunit SAP30 (220 aa).

The interaction with NCOR1 stretch occupies residues 1–129; the sequence is MNGFTPDEMS…QSVRNRRKRK (129 aa). Residue Thr-5 is modified to Phosphothreonine. The segment at 67–115 adopts an Atypical zinc-finger fold; sequence CCLREDGERCGRAAGNASFSKRIQKSISQKKVKIELDKSARHLYICDYH. Lys-87 is covalently cross-linked (Glycyl lysine isopeptide (Lys-Gly) (interchain with G-Cter in SUMO2)). A disordered region spans residues 123 to 143; sequence RNRRKRKGSDDDGGDSPVQDI. The interaction with SIN3A stretch occupies residues 130-220; the sequence is GSDDDGGDSP…SDLKVDSGVH (91 aa). A phosphoserine mark is found at Ser-131 and Ser-138. Thr-145 bears the Phosphothreonine mark. Glycyl lysine isopeptide (Lys-Gly) (interchain with G-Cter in SUMO2) cross-links involve residues Lys-194, Lys-205, and Lys-214.

Belongs to the SAP30 family. In terms of assembly, component of the histone deacetylase complex that includes at least SIN3A, HDAC1 and HDAC2. Found in a complex composed of at least SINHCAF, SIN3A, HDAC1, SAP30, RBBP4, OGT and TET1. Interacts with HDAC1. Interacts with SIN3A, SIN3B, HDAC2, RBBP4 and NCOR1. Interacts with SAMSN1. Interacts with HCFC1. Interacts with SAP30BP. In terms of tissue distribution, expressed in all tissues tested with highest levels in pancreas, ovary, PBL, spleen and thymus; lowest levels in brain, placenta, lung and kidney.

It localises to the nucleus. Its function is as follows. Involved in the functional recruitment of the Sin3-histone deacetylase complex (HDAC) to a specific subset of N-CoR corepressor complexes. Capable of transcription repression by N-CoR. Active in deacetylating core histone octamers (when in a complex) but inactive in deacetylating nucleosomal histones. Functionally, (Microbial infection) Involved in transcriptional repression of HHV-1 genes TK and gC. The chain is Histone deacetylase complex subunit SAP30 from Homo sapiens (Human).